A 284-amino-acid polypeptide reads, in one-letter code: Putative ABC transporter ATP-binding protein tll2439 (284 aa).

Residues 6–242 (LEFHQVGFRY…WPTFAPELGT (237 aa)) form the ABC transporter domain. An ATP-binding site is contributed by 40-47 (GLNGSGKS).

The protein belongs to the ABC transporter superfamily.

The protein localises to the cell inner membrane. Functionally, probably part of an ABC transporter complex. Responsible for energy coupling to the transport system. In Thermosynechococcus vestitus (strain NIES-2133 / IAM M-273 / BP-1), this protein is Putative ABC transporter ATP-binding protein tll2439.